The following is a 309-amino-acid chain: Probable manganese-dependent inorganic pyrophosphatase (309 aa).

Mn(2+) is bound by residues histidine 9, aspartate 13, aspartate 15, aspartate 75, histidine 97, and aspartate 149.

This sequence belongs to the PPase class C family. Mn(2+) is required as a cofactor.

It is found in the cytoplasm. The catalysed reaction is diphosphate + H2O = 2 phosphate + H(+). The sequence is that of Probable manganese-dependent inorganic pyrophosphatase from Bacillus anthracis (strain CDC 684 / NRRL 3495).